We begin with the raw amino-acid sequence, 127 residues long: Modulator protein MzrA (127 aa).

Residues 1 to 11 (MRKPRVTLRHL) lie on the Cytoplasmic side of the membrane. A helical membrane pass occupies residues 12–31 (AWSTMLLMVLGTGMLFWSAV). At 32-127 (RQQESTLAIR…RLRDAPHRMG (96 aa)) the chain is on the periplasmic side.

Belongs to the MzrA family. As to quaternary structure, interacts with EnvZ.

It is found in the cell inner membrane. In terms of biological role, modulates the activity of the EnvZ/OmpR two-component regulatory system, probably by directly modulating EnvZ enzymatic activity and increasing stability of phosphorylated OmpR. The chain is Modulator protein MzrA from Citrobacter rodentium (strain ICC168) (Citrobacter freundii biotype 4280).